Here is a 424-residue protein sequence, read N- to C-terminus: C4-dicarboxylate transport protein (424 aa).

8 helical membrane-spanning segments follow: residues 4-24 (SLFK…VLLG), 44-64 (LIKM…IAGM), 76-96 (VALI…LVVV), 142-162 (IGAF…LFGF), 184-206 (VFFG…AMAF), 222-242 (LIVC…GLIA), 326-346 (IWHQ…AAGV), and 352-372 (IVLA…LALI).

This sequence belongs to the dicarboxylate/amino acid:cation symporter (DAACS) (TC 2.A.23) family.

Its subcellular location is the cell inner membrane. In terms of biological role, responsible for the transport of dicarboxylates such as succinate, fumarate, and malate from the periplasm across the membrane. The polypeptide is C4-dicarboxylate transport protein (Erwinia tasmaniensis (strain DSM 17950 / CFBP 7177 / CIP 109463 / NCPPB 4357 / Et1/99)).